Consider the following 188-residue polypeptide: NADH-quinone oxidoreductase subunit I 2 (188 aa).

2 consecutive 4Fe-4S ferredoxin-type domains span residues 56-88 (HFLKRDDEGEIKCVACELCARICPCDCIEVVPY) and 98-127 (AKFEIDTARCLFCGLCEDACPADAIALGQQ). C68, C71, C74, C78, C107, C110, C113, and C117 together coordinate [4Fe-4S] cluster.

It belongs to the complex I 23 kDa subunit family. In terms of assembly, NDH-1 is composed of 14 different subunits. Subunits NuoA, H, J, K, L, M, N constitute the membrane sector of the complex. [4Fe-4S] cluster is required as a cofactor.

The protein resides in the cell inner membrane. The catalysed reaction is a quinone + NADH + 5 H(+)(in) = a quinol + NAD(+) + 4 H(+)(out). NDH-1 shuttles electrons from NADH, via FMN and iron-sulfur (Fe-S) centers, to quinones in the respiratory chain. The immediate electron acceptor for the enzyme in this species is believed to be ubiquinone. Couples the redox reaction to proton translocation (for every two electrons transferred, four hydrogen ions are translocated across the cytoplasmic membrane), and thus conserves the redox energy in a proton gradient. This Rhizobium meliloti (strain 1021) (Ensifer meliloti) protein is NADH-quinone oxidoreductase subunit I 2.